The sequence spans 25 residues: Histone H1.1 (25 aa).

One can recognise an H15 domain in the interval 1–25 (MVSEAIAALKEREGSSEFAIGKKKE). The disordered stretch occupies residues 1–25 (MVSEAIAALKEREGSSEFAIGKKKE). Over residues 9-25 (LKEREGSSEFAIGKKKE) the composition is skewed to basic and acidic residues.

Its subcellular location is the nucleus. The protein localises to the chromosome. In terms of biological role, histones H1 are necessary for the condensation of nucleosome chains into higher-order structures. The sequence is that of Histone H1.1 from Triticum aestivum (Wheat).